The following is a 975-amino-acid chain: Kinesin-like protein KIN-14K (975 aa).

Positions 1-40 (MKNRIKKGSSMIGVYGRSDGSSSIQSSNGSESRESIDDNK) are disordered. Residues 17–30 (RSDGSSSIQSSNGS) show a composition bias toward low complexity. Basic and acidic residues predominate over residues 31–40 (ESRESIDDNK). The region spanning 40–143 (KQGHQSLVEW…SLKALKASFS (104 aa)) is the Calponin-homology (CH) domain. Positions 289 to 345 (KERSNAELSKLKQELEIVKETHEKQFLELKLNAQKAKVELERQVKNSELRVVEAKEL) form a coiled coil. One can recognise a Kinesin motor domain in the interval 436-746 (NIRVYCRIRP…LKFAERVSGV (311 aa)). 520 to 527 (GQTGSGKT) provides a ligand contact to ATP. Positions 757–788 (GRDVRQLMEQVSNLKDMIAKKDEELQKFQNIN) form a coiled coil. 2 disordered regions span residues 801–852 (VSPP…GAKD) and 900–975 (LFPE…NRKR). Residues 944-958 (LSISTTSSKALTSSK) are compositionally biased toward low complexity.

Belongs to the TRAFAC class myosin-kinesin ATPase superfamily. Kinesin family. KIN-14 subfamily.

This is Kinesin-like protein KIN-14K from Arabidopsis thaliana (Mouse-ear cress).